The primary structure comprises 734 residues: Photosystem I P700 chlorophyll a apoprotein A2 (734 aa).

Helical transmembrane passes span 46 to 69, 135 to 158, 175 to 199, 273 to 291, 330 to 353, 369 to 395, 417 to 439, and 517 to 535; these read IFAS…FHVA, LYTG…LHLQ, LNHH…HVAI, IAHH…GHMY, LHFQ…QHMY, AALY…IFFI, AIIS…LYVH, and FLVH…LILV. [4Fe-4S] cluster contacts are provided by C559 and C568. 2 consecutive transmembrane segments (helical) span residues 575–596 and 643–665; these read AFYL…YWHW and LSVW…MFLI. The chlorophyll a site is built by H654, M662, and Y670. Phylloquinone is bound at residue W671. Residues 707–727 form a helical membrane-spanning segment; sequence LVGLAHFSVGYIFTYAAFLIA.

Belongs to the PsaA/PsaB family. As to quaternary structure, the PsaA/B heterodimer binds the P700 chlorophyll special pair and subsequent electron acceptors. PSI consists of a core antenna complex that captures photons, and an electron transfer chain that converts photonic excitation into a charge separation. The eukaryotic PSI reaction center is composed of at least 11 subunits. It depends on P700 is a chlorophyll a/chlorophyll a' dimer, A0 is one or more chlorophyll a, A1 is one or both phylloquinones and FX is a shared 4Fe-4S iron-sulfur center. as a cofactor.

The protein localises to the plastid. Its subcellular location is the chloroplast thylakoid membrane. It carries out the reaction reduced [plastocyanin] + hnu + oxidized [2Fe-2S]-[ferredoxin] = oxidized [plastocyanin] + reduced [2Fe-2S]-[ferredoxin]. In terms of biological role, psaA and PsaB bind P700, the primary electron donor of photosystem I (PSI), as well as the electron acceptors A0, A1 and FX. PSI is a plastocyanin-ferredoxin oxidoreductase, converting photonic excitation into a charge separation, which transfers an electron from the donor P700 chlorophyll pair to the spectroscopically characterized acceptors A0, A1, FX, FA and FB in turn. Oxidized P700 is reduced on the lumenal side of the thylakoid membrane by plastocyanin. This Psilotum nudum (Whisk fern) protein is Photosystem I P700 chlorophyll a apoprotein A2.